The following is a 355-amino-acid chain: Protein RecA (355 aa).

67 to 74 (GPESSGKT) lines the ATP pocket. Residues 336 to 355 (NSAASDYEDNENEEMNNEEF) are disordered. Residues 341–355 (DYEDNENEEMNNEEF) show a composition bias toward acidic residues.

It belongs to the RecA family.

It localises to the cytoplasm. In terms of biological role, can catalyze the hydrolysis of ATP in the presence of single-stranded DNA, the ATP-dependent uptake of single-stranded DNA by duplex DNA, and the ATP-dependent hybridization of homologous single-stranded DNAs. It interacts with LexA causing its activation and leading to its autocatalytic cleavage. This is Protein RecA from Photorhabdus laumondii subsp. laumondii (strain DSM 15139 / CIP 105565 / TT01) (Photorhabdus luminescens subsp. laumondii).